A 333-amino-acid polypeptide reads, in one-letter code: Fructose-1,6-bisphosphatase class 1 (333 aa).

4 residues coordinate Mg(2+): glutamate 92, aspartate 113, leucine 115, and aspartate 116. Substrate is bound by residues 116 to 119 (DGSS), asparagine 209, tyrosine 242, and lysine 272. Residue glutamate 278 participates in Mg(2+) binding.

It belongs to the FBPase class 1 family. Homotetramer. The cofactor is Mg(2+).

Its subcellular location is the cytoplasm. It carries out the reaction beta-D-fructose 1,6-bisphosphate + H2O = beta-D-fructose 6-phosphate + phosphate. It functions in the pathway carbohydrate biosynthesis; Calvin cycle. This is Fructose-1,6-bisphosphatase class 1 from Chlorobaculum parvum (strain DSM 263 / NCIMB 8327) (Chlorobium vibrioforme subsp. thiosulfatophilum).